Consider the following 631-residue polypeptide: Chaperone protein DnaK (631 aa).

T198 is subject to Phosphothreonine; by autocatalysis. Positions 598–631 (YSAQQGGEQPGAAKKDDVVDAEFTEVDDDKKKSA) are disordered.

It belongs to the heat shock protein 70 family.

Acts as a chaperone. In Azorhizobium caulinodans (strain ATCC 43989 / DSM 5975 / JCM 20966 / LMG 6465 / NBRC 14845 / NCIMB 13405 / ORS 571), this protein is Chaperone protein DnaK.